Consider the following 388-residue polypeptide: FMRFamide neuropeptides (388 aa).

The N-terminal stretch at M1 to A21 is a signal peptide. A propeptide spanning residues Y22 to R172 is cleaved from the precursor. A disordered region spans residues F40–L74. Over residues L64 to L74 the composition is skewed to polar residues. A phenylalanine amide mark is found at F179, F196, F208, F219, F230, F241, F253, F265, F277, F289, F301, F313, F325, F337, F346, F359, and F372. The disordered stretch occupies residues G360–K388. The span at K374 to K388 shows a compositional bias: basic and acidic residues. A propeptide spanning residues S375 to K388 is cleaved from the precursor.

The protein belongs to the FARP (FMRFamide related peptide) family. In the brain, expressed in 2 large cells in the lateral neurons in each optic lobe, 2 slightly bigger cells on both sides of the tritocerebrum, around 14 small cells in the dorsal area, around 13 cells in the subesophageal ganglion, and in the central brain.

It localises to the secreted. The sequence is that of FMRFamide neuropeptides from Musca domestica (House fly).